A 135-amino-acid polypeptide reads, in one-letter code: Large ribosomal subunit protein eL27y (135 aa).

The protein belongs to the eukaryotic ribosomal protein eL27 family.

The polypeptide is Large ribosomal subunit protein eL27y (RPL27B) (Arabidopsis thaliana (Mouse-ear cress)).